Reading from the N-terminus, the 514-residue chain is Synaptic vesicular amine transporter (514 aa).

The Cytoplasmic portion of the chain corresponds to 1-20 (MALSELALVRWLQESRRSRK). The helical transmembrane segment at 21–41 (LILFIVFLALLLDNMLLTVVV) threads the bilayer. Over 42–129 (PIIPSYLYSI…EDKDLLNENV (88 aa)) the chain is Lumenal, vesicle. N-linked (GlcNAc...) asparagine glycosylation is found at N84 and N91. C117 and C324 are joined by a disulfide. Residues 130 to 150 (QVGLLFASKATVQLITNPFIG) traverse the membrane as a helical segment. The Cytoplasmic portion of the chain corresponds to 151–159 (LLTNRIGYP). A helical transmembrane segment spans residues 160–180 (IPIFAGFCIMFVSTIMFAFSS). At 181 to 189 (SYAFLLIAR) the chain is on the lumenal, vesicle side. A helical membrane pass occupies residues 190 to 210 (SLQGIGSSCSSVAGMGMLASV). Over 211 to 219 (YTDDEERGN) the chain is Cytoplasmic. A helical membrane pass occupies residues 220 to 242 (VMGIALGGLAMGVLVGPPFGSVL). Positions 228 and 232 each coordinate serotonin. At 243 to 248 (YEFVGK) the chain is on the lumenal, vesicle side. A helical membrane pass occupies residues 249–271 (TAPFLVLAALVLLDGAIQLFVLQ). Residues 272-291 (PSRVQPESQKGTPLTTLLKD) are Cytoplasmic-facing. The chain crosses the membrane as a helical span at residues 292–311 (PYILIAAGSICFANMGIAML). 5 residues coordinate serotonin: N305, I308, E312, F334, and Y341. The Lumenal, vesicle portion of the chain corresponds to 312–328 (EPALPIWMMETMCSRKW). Residues 329 to 352 (QLGVAFLPASISYLIGTNIFGILA) traverse the membrane as a helical segment. Over 353 to 357 (HKMGR) the chain is Cytoplasmic. The helical transmembrane segment at 358-378 (WLCALLGMIIVGVSILCIPFA) threads the bilayer. Residues 379-389 (KNIYGLIAPNF) are Lumenal, vesicle-facing. Residues 390-410 (GVGFAIGMVDSSMMPIMGYLV) traverse the membrane as a helical segment. D399 provides a ligand contact to serotonin. The Cytoplasmic segment spans residues 411–414 (DLRH). The helical transmembrane segment at 415-435 (VSVYGSVYAIADVAFCMGYAI) threads the bilayer. Residue Y433 participates in serotonin binding. Topologically, residues 436–440 (GPSAG) are lumenal, vesicle. Residues 441–462 (GAIAKAIGFPWLMTIIGIIDIL) traverse the membrane as a helical segment. Residues 463–514 (FAPLCFFLRSPPAKEEKMAILMDHNCPIKTKMYTQNNIQSYPIGEDEESESD) lie on the Cytoplasmic side of the membrane. 2 positions are modified to phosphoserine: S511 and S513.

The protein belongs to the major facilitator superfamily. Vesicular transporter family. As to quaternary structure, interacts with SLC6A3. Expressed in neuronal and neuroendocrine tissues. Detected in central and peripheral nervous system in particular in axonal and dendritic processes in dopaminergic cells of substantia nigra, histaminergic neuronal cell bodies of substantia nigra and tuberomammillary nucleus, in ganglion cells of sympathetic glia and in peripheral sympathetic nerve terminals in stomach and duodenum (at protein level). Highly expressed in chromaffin cells of the adrenal medulla and histamine-storing enterochromaffin-like cells of oxyntic mucosa (at protein level).

It is found in the cytoplasmic vesicle. The protein localises to the secretory vesicle. The protein resides in the synaptic vesicle membrane. It localises to the secretory vesicle membrane. Its subcellular location is the cell projection. It is found in the axon. The protein localises to the dendrite. It carries out the reaction serotonin(in) + 2 H(+)(out) = serotonin(out) + 2 H(+)(in). The enzyme catalyses dopamine(in) + 2 H(+)(out) = dopamine(out) + 2 H(+)(in). The catalysed reaction is histamine(in) + 2 H(+)(out) = histamine(out) + 2 H(+)(in). Its activity is regulated as follows. Strongly inhibited by reserpine and tetrabenazine. Also inhibited to a lesser extent by ketanserin and fenfluramine. Reserpine and ketanserin inhibit by blocking the substrate-binding pocket. Tetrabenazine traps SLC18A2/VMAT2 in an occluded conformation and its inhibition is specific to SLC18A2/VMAT2 but not SLC18A1/VMAT1. In terms of biological role, electrogenic antiporter that exchanges one cationic monoamine with two intravesicular protons across the membrane of secretory and synaptic vesicles. Uses the electrochemical proton gradient established by the V-type proton-pump ATPase to accumulate high concentrations of monoamines inside the vesicles prior to their release via exocytosis. Transports a variety of catecholamines such as dopamine, adrenaline and noradrenaline, histamine, and indolamines such as serotonin. Regulates the transvesicular monoaminergic gradient that determines the quantal size. Mediates somatodendritic dopamine release in hippocampal neurons, likely as part of a regulated secretory pathway that integrates retrograde synaptic signals. Acts as a primary transporter for striatal dopamine loading ensuring impulse-dependent release of dopamine at the synaptic cleft. Responsible for histamine and serotonin storage and subsequent corelease from mast cell granules. This chain is Synaptic vesicular amine transporter (SLC18A2), found in Homo sapiens (Human).